We begin with the raw amino-acid sequence, 237 residues long: Lipoprotein-releasing system ATP-binding protein LolD (237 aa).

The 229-residue stretch at 8–236 (ISVTDLRKTF…EAIKKSVKTA (229 aa)) folds into the ABC transporter domain. 40–47 (GKSGSGKS) contributes to the ATP binding site.

The protein belongs to the ABC transporter superfamily. Lipoprotein translocase (TC 3.A.1.125) family. The complex is composed of two ATP-binding proteins (LolD) and two transmembrane proteins (LolC and LolE).

Its subcellular location is the cell inner membrane. Functionally, part of the ABC transporter complex LolCDE involved in the translocation of mature outer membrane-directed lipoproteins, from the inner membrane to the periplasmic chaperone, LolA. Responsible for the formation of the LolA-lipoprotein complex in an ATP-dependent manner. The polypeptide is Lipoprotein-releasing system ATP-binding protein LolD (Leptospira interrogans serogroup Icterohaemorrhagiae serovar Lai (strain 56601)).